A 153-amino-acid chain; its full sequence is Putative ubiquitin-conjugating enzyme E2 N-like (153 aa).

Residues 3–150 (ELPHRIIKET…ARAWTRLYAM (148 aa)) form the UBC core domain. At Lys-83 the chain carries N6-acetyllysine.

This sequence belongs to the ubiquitin-conjugating enzyme family. Expressed in epididymis (at protein level).

In Homo sapiens (Human), this protein is Putative ubiquitin-conjugating enzyme E2 N-like (UBE2NL).